The chain runs to 113 residues: Death-associated protein-like 1.L (113 aa).

Positions 1–57 (MAKEQKMQSSPQALKAGHLPAVKAGGMRVSKKQGNEENSAPEKNAKKTLQEKPSSVL) are disordered.

It belongs to the DAP-DAPL1 family. As to quaternary structure, associates with ribosomes; preventing translation. Interacts with eiF5a (eif5a and eif5a2); preventing translation.

Ribosome-binding protein that promotes ribosome hibernation, a process during which ribosomes are stabilized in an inactive state and preserved from proteasomal degradation. Acts via its association with eiF5a (eif5a and eif5a2) at the polypeptide exit tunnel of the ribosome, preventing mRNA translation. Plays a key role in ribosome hibernation in the mature egg by preventing mRNA translation, leading to ribosome inactivation. Ribosomes, which are produced in large quantities during oogenesis, are stored and translationally repressed in the egg and early embryo. This chain is Death-associated protein-like 1.L (dapl1.L), found in Xenopus laevis (African clawed frog).